We begin with the raw amino-acid sequence, 328 residues long: Tetraacyldisaccharide 4'-kinase (328 aa).

55 to 62 is an ATP binding site; the sequence is TAGGNGKT.

The protein belongs to the LpxK family.

The enzyme catalyses a lipid A disaccharide + ATP = a lipid IVA + ADP + H(+). It functions in the pathway glycolipid biosynthesis; lipid IV(A) biosynthesis; lipid IV(A) from (3R)-3-hydroxytetradecanoyl-[acyl-carrier-protein] and UDP-N-acetyl-alpha-D-glucosamine: step 6/6. Its function is as follows. Transfers the gamma-phosphate of ATP to the 4'-position of a tetraacyldisaccharide 1-phosphate intermediate (termed DS-1-P) to form tetraacyldisaccharide 1,4'-bis-phosphate (lipid IVA). The sequence is that of Tetraacyldisaccharide 4'-kinase from Escherichia fergusonii (strain ATCC 35469 / DSM 13698 / CCUG 18766 / IAM 14443 / JCM 21226 / LMG 7866 / NBRC 102419 / NCTC 12128 / CDC 0568-73).